A 274-amino-acid polypeptide reads, in one-letter code: Exosome complex component RRP40 (274 aa).

The residue at position 2 (Ala-2) is an N-acetylalanine. A Glycyl lysine isopeptide (Lys-Gly) (interchain with G-Cter in SUMO2) cross-link involves residue Lys-150.

It belongs to the RRP40 family. As to quaternary structure, component of the RNA exosome core complex (Exo-9), composed of EXOSC1, EXOSC2, EXOSC3, EXOSC4, EXOSC5, EXOSC6, EXOSC7, EXOSC8 and EXOSC9; within the complex interacts with EXOSC5 and EXOSC9. The catalytically inactive RNA exosome core complex (Exo-9) associates with the catalytic subunit EXOSC10/RRP6. Exo-9 may associate with DIS3 to form the nucleolar exosome complex, or DIS3L to form the cytoplasmic exosome complex. Exo-9 is formed by a hexameric base ring consisting of the heterodimers EXOSC4-EXOSC9, EXOSC5-EXOSC8 and EXOSC6-EXOSC7, and a cap ring consisting of EXOSC1, EXOSC2 and EXOSC3. The RNA exosome complex associates with cofactors C1D/RRP47, MPHOSPH6/MPP6 and MTREX/MTR4. Interacts with MPHOSPH6/MPP6; the interaction is direct. Interacts with GTPBP1. Interacts with ZC3HAV1. Interacts with DDX17 only in the presence of ZC3HAV1 in an RNA-independent manner. Interacts with DHX36; this interaction occurs in a RNase-insensitive manner. Interacts with HBS1L isoform 2.

It localises to the cytoplasm. Its subcellular location is the nucleus. The protein localises to the nucleolus. In terms of biological role, non-catalytic component of the RNA exosome complex which has 3'-&gt;5' exoribonuclease activity and participates in a multitude of cellular RNA processing and degradation events. In the nucleus, the RNA exosome complex is involved in proper maturation of stable RNA species such as rRNA, snRNA and snoRNA, in the elimination of RNA processing by-products and non-coding 'pervasive' transcripts, such as antisense RNA species and promoter-upstream transcripts (PROMPTs), and of mRNAs with processing defects, thereby limiting or excluding their export to the cytoplasm. The RNA exosome may be involved in Ig class switch recombination (CSR) and/or Ig variable region somatic hypermutation (SHM) by targeting AICDA deamination activity to transcribed dsDNA substrates. In the cytoplasm, the RNA exosome complex is involved in general mRNA turnover and specifically degrades inherently unstable mRNAs containing AU-rich elements (AREs) within their 3' untranslated regions, and in RNA surveillance pathways, preventing translation of aberrant mRNAs. It seems to be involved in degradation of histone mRNA. The catalytic inactive RNA exosome core complex of 9 subunits (Exo-9) is proposed to play a pivotal role in the binding and presentation of RNA for ribonucleolysis, and to serve as a scaffold for the association with catalytic subunits and accessory proteins or complexes. EXOSC3 as peripheral part of the Exo-9 complex stabilizes the hexameric ring of RNase PH-domain subunits through contacts with EXOSC9 and EXOSC5. The protein is Exosome complex component RRP40 (Exosc3) of Mus musculus (Mouse).